Consider the following 756-residue polypeptide: MNKSLMVTKRDGTQEQINLDKIHRVITWAAEGLDNVSVSQVELRSHIQFYEGIRTSDIHETIIKAAADLISKDSPDYQYLAARLAIFHLRKKAYGHFDPPRLYDHVKKLVRMEKYDQALLDDYTREEWDTMDGFIDHWRDMTFSYAAVKQLEGKYLVQNRVTGEIYESAQFLYLLVSASLFSKYPKETRLDYVKRFYDATSTFKISLPTPIMAGVRTPTRQFSSCVLIECDDSLDSINATASAIVKYVSQRAGIGINAGAIRALGSEIRGGEAFHTGCIPFYKYFQTAVKSCSQGGVRGGAATLYYPIWHLEAENLLVLKNNRGVEDNRVRHMDYGVQLNKLMYQRLIKGSEITLFSPSDVPGLYEAFFADQDKFEELYVKYEQDPTIRKRTVKAVEIFSLLMQERASTGRIYIQNVDHCNTHSPFDPQVAPVRQSNLCLEIALPTKPLQHINDENGEIALCTLSAFNLGKIENLDELEELADLAVRSLDALLDYQDYPVVAAKRSSLARRSLGIGVINYAYYLAKNGVRYSDGSANDLTHRTFEAIQYYLLKASMNLAKEQGACEYFNETTYAKGILPIDTYKKDLDSLTQEPLHYDWESLRKDIQEFGLRNSTLTALMPSETSSQISNATNGIEPPRGHVSIKASKDGILKQVVPEYENLMDNYELLWDIPSNDGYLHLVGIMQKFVDQAISANTNYDPKRFEDGKVPMKVLLKDLLTAYKYGLKTLYYQNTRDGAEDVQEDLDDGCAGGACKI.

One can recognise an ATP-cone domain in the interval 5–95 (LMVTKRDGTQ…IFHLRKKAYG (91 aa)). ATP-binding positions include lysine 9, 15–21 (EQINLDK), threonine 55, and lysine 91. Threonine 209 contacts GDP. Cysteines 225 and 462 form a disulfide. DTTP-binding positions include 232–234 (DSL), arginine 262, and arginine 269. Asparagine 437 contributes to the GDP binding site. Asparagine 437 serves as the catalytic Proton acceptor. Residue cysteine 439 is the Cysteine radical intermediate of the active site. GDP-binding positions include glutamate 441 and 623 to 625 (ETS). The active-site Proton acceptor is glutamate 441.

This sequence belongs to the ribonucleoside diphosphate reductase large chain family. As to quaternary structure, tetramer of two alpha and two beta subunits.

The catalysed reaction is a 2'-deoxyribonucleoside 5'-diphosphate + [thioredoxin]-disulfide + H2O = a ribonucleoside 5'-diphosphate + [thioredoxin]-dithiol. Under complex allosteric control mediated by deoxynucleoside triphosphates and ATP binding to separate specificity and activation sites on the alpha subunit. The type of nucleotide bound at the specificity site determines substrate preference. It seems probable that ATP makes the enzyme reduce CDP and UDP, dGTP favors ADP reduction and dTTP favors GDP reduction. Stimulated by ATP and inhibited by dATP binding to the activity site. In terms of biological role, provides the precursors necessary for DNA synthesis. Catalyzes the biosynthesis of deoxyribonucleotides from the corresponding ribonucleotides. The polypeptide is Ribonucleoside-diphosphate reductase subunit alpha (nrdA) (Haemophilus influenzae (strain ATCC 51907 / DSM 11121 / KW20 / Rd)).